The sequence spans 315 residues: Olfactory receptor 3A10 (315 aa).

Topologically, residues 1–28 (MEPGAWGNRTAVTDFILLGLTGNVRLQP) are extracellular. A glycan (N-linked (GlcNAc...) asparagine) is linked at Asn8. A helical transmembrane segment spans residues 29–49 (ILFVVFFFAYIVTVGGNLSIL). The Cytoplasmic segment spans residues 50-68 (AAIFVEPKLHTPMYYFLGN). The helical transmembrane segment at 69–89 (LSLLDIGCISVTVPPMLVCLL) threads the bilayer. Over 90-97 (AHECRVPY) the chain is Extracellular. The helical transmembrane segment at 98-118 (AACISQLFFFHLLAGVDCHLL) threads the bilayer. Cysteines 100 and 192 form a disulfide. The Cytoplasmic portion of the chain corresponds to 119-145 (TAMAYDRYLAICQPLTYSTRMSREVQG). A helical membrane pass occupies residues 146-166 (TLVGICCTVSFINALTHTVAV). Residues 167 to 200 (SVLDFCGPNVVNHFYCDLPPLFQLSCSSIYLNGQ) are Extracellular-facing. A helical transmembrane segment spans residues 201-221 (LLFVGATFMGVVPMILISVSY). At 222-239 (AHVAAAVLRIRSTEGRKK) the chain is on the cytoplasmic side. Residues 240-260 (AFSTCGSHLTVVCIFYGTGFF) traverse the membrane as a helical segment. Residues 261-274 (SYMRLGSVSASDKD) are Extracellular-facing. Residues 275–295 (KGIGILNTILSPMLNPLIYSL) form a helical membrane-spanning segment. Residues 296-315 (RNPDVQGALKRVLTGKRYPV) are Cytoplasmic-facing.

The protein belongs to the G-protein coupled receptor 1 family.

The protein resides in the cell membrane. Its function is as follows. Odorant receptor. In Mus musculus (Mouse), this protein is Olfactory receptor 3A10.